The primary structure comprises 399 residues: L-methionine gamma-lyase (399 aa).

Residues 59-61 and 89-90 contribute to the pyridoxal 5'-phosphate site; these read YTR and GI. Tyrosine 114 serves as a coordination point for substrate. 209-211 is a pyridoxal 5'-phosphate binding site; sequence SAT. Position 212 is an N6-(pyridoxal phosphate)lysine (lysine 212). Arginine 376 contacts substrate.

The protein belongs to the trans-sulfuration enzymes family. L-methionine gamma-lyase subfamily. In terms of assembly, homotetramer; dimer of active dimers. It depends on pyridoxal 5'-phosphate as a cofactor.

It catalyses the reaction L-methionine + H2O = methanethiol + 2-oxobutanoate + NH4(+). The enzyme catalyses L-homocysteine + H2O = 2-oxobutanoate + hydrogen sulfide + NH4(+) + H(+). Functionally, catalyzes the alpha,gamma-elimination of L-methionine to produce methanethiol, 2-oxobutanoate and ammonia; methanethiol (methyl mercaptan) is considered to be one of the main causes of the oral malodor in periodontal disease and may also play a role in the pathogenicity of P.gingivalis in that disease. Is also able to catalyze the alpha,gamma-elimination of L-homocysteine. The polypeptide is L-methionine gamma-lyase (Porphyromonas gingivalis (strain ATCC BAA-308 / W83)).